A 314-amino-acid polypeptide reads, in one-letter code: Altered inheritance of mitochondria protein 6 homolog ARB_06966 (314 aa).

The signal sequence occupies residues 1-21 (MKSSILASAAILAASLEPVAA). N91 and N184 each carry an N-linked (GlcNAc...) asparagine glycan.

Belongs to the AIM6 family.

The protein localises to the secreted. The sequence is that of Altered inheritance of mitochondria protein 6 homolog ARB_06966 from Arthroderma benhamiae (strain ATCC MYA-4681 / CBS 112371) (Trichophyton mentagrophytes).